We begin with the raw amino-acid sequence, 501 residues long: 2-isopropylmalate synthase (501 aa).

Residues V7 to A269 enclose the Pyruvate carboxyltransferase domain. Mn(2+) contacts are provided by D16, H204, H206, and N240. The interval Q394–L501 is regulatory domain.

The protein belongs to the alpha-IPM synthase/homocitrate synthase family. LeuA type 1 subfamily. As to quaternary structure, homodimer. Mn(2+) serves as cofactor.

It localises to the cytoplasm. The catalysed reaction is 3-methyl-2-oxobutanoate + acetyl-CoA + H2O = (2S)-2-isopropylmalate + CoA + H(+). Its pathway is amino-acid biosynthesis; L-leucine biosynthesis; L-leucine from 3-methyl-2-oxobutanoate: step 1/4. In terms of biological role, catalyzes the condensation of the acetyl group of acetyl-CoA with 3-methyl-2-oxobutanoate (2-ketoisovalerate) to form 3-carboxy-3-hydroxy-4-methylpentanoate (2-isopropylmalate). In Leptospira interrogans serogroup Icterohaemorrhagiae serovar copenhageni (strain Fiocruz L1-130), this protein is 2-isopropylmalate synthase.